Here is a 644-residue protein sequence, read N- to C-terminus: Exoribonuclease 2 (644 aa).

In terms of domain architecture, RNB spans 189 to 516 (REDLTALNFV…NHRLLKAIIT (328 aa)). Residues 561–643 (DTRFTAEIID…ETRNVIARPV (83 aa)) enclose the S1 motif domain.

Belongs to the RNR ribonuclease family. RNase II subfamily.

The protein resides in the cytoplasm. It catalyses the reaction Exonucleolytic cleavage in the 3'- to 5'-direction to yield nucleoside 5'-phosphates.. Involved in mRNA degradation. Hydrolyzes single-stranded polyribonucleotides processively in the 3' to 5' direction. This chain is Exoribonuclease 2, found in Yersinia pseudotuberculosis serotype O:3 (strain YPIII).